The sequence spans 275 residues: Probable dual specificity protein phosphatase DDB_G0271350 (275 aa).

Residues 2-143 (GISMILDNFL…LCDLELKLTN (142 aa)) enclose the Tyrosine-protein phosphatase domain. Residue cysteine 87 is the Phosphocysteine intermediate of the active site.

The protein belongs to the protein-tyrosine phosphatase family. Non-receptor class dual specificity subfamily.

The enzyme catalyses O-phospho-L-tyrosyl-[protein] + H2O = L-tyrosyl-[protein] + phosphate. It catalyses the reaction O-phospho-L-seryl-[protein] + H2O = L-seryl-[protein] + phosphate. The catalysed reaction is O-phospho-L-threonyl-[protein] + H2O = L-threonyl-[protein] + phosphate. Its function is as follows. Has a dual specificity toward Ser/Thr and Tyr-containing proteins. In Dictyostelium discoideum (Social amoeba), this protein is Probable dual specificity protein phosphatase DDB_G0271350.